Reading from the N-terminus, the 348-residue chain is Probable dual-specificity RNA methyltransferase RlmN (348 aa).

The Proton acceptor role is filled by glutamate 92. A Radical SAM core domain is found at histidine 98–aspartate 331. Cysteine 105 and cysteine 336 form a disulfide bridge. The [4Fe-4S] cluster site is built by cysteine 112, cysteine 116, and cysteine 119. Residues glycine 159–glutamate 160, serine 191, serine 214–histidine 216, and asparagine 290 each bind S-adenosyl-L-methionine. The active-site S-methylcysteine intermediate is the cysteine 336.

Belongs to the radical SAM superfamily. RlmN family. [4Fe-4S] cluster is required as a cofactor.

It localises to the cytoplasm. The enzyme catalyses adenosine(2503) in 23S rRNA + 2 reduced [2Fe-2S]-[ferredoxin] + 2 S-adenosyl-L-methionine = 2-methyladenosine(2503) in 23S rRNA + 5'-deoxyadenosine + L-methionine + 2 oxidized [2Fe-2S]-[ferredoxin] + S-adenosyl-L-homocysteine. It catalyses the reaction adenosine(37) in tRNA + 2 reduced [2Fe-2S]-[ferredoxin] + 2 S-adenosyl-L-methionine = 2-methyladenosine(37) in tRNA + 5'-deoxyadenosine + L-methionine + 2 oxidized [2Fe-2S]-[ferredoxin] + S-adenosyl-L-homocysteine. Functionally, specifically methylates position 2 of adenine 2503 in 23S rRNA and position 2 of adenine 37 in tRNAs. This chain is Probable dual-specificity RNA methyltransferase RlmN, found in Fervidobacterium nodosum (strain ATCC 35602 / DSM 5306 / Rt17-B1).